The primary structure comprises 357 residues: DNA integrity scanning protein DisA (357 aa).

The 139-residue stretch at 9 to 147 (DRKLLEILKT…DDIKYILRDS (139 aa)) folds into the DAC domain. Residues Gly-76, Leu-94, and 107–111 (TRHRT) each bind ATP.

This sequence belongs to the DisA family. Homooctamer. Mg(2+) serves as cofactor.

It carries out the reaction 2 ATP = 3',3'-c-di-AMP + 2 diphosphate. Functionally, participates in a DNA-damage check-point that is active prior to asymmetric division when DNA is damaged. DisA forms globular foci that rapidly scan along the chromosomes during sporulation, searching for lesions. When a lesion is present, DisA pauses at the lesion site. This triggers a cellular response that culminates in a temporary block in sporulation initiation. In terms of biological role, also has diadenylate cyclase activity, catalyzing the condensation of 2 ATP molecules into cyclic di-AMP (c-di-AMP). c-di-AMP acts as a signaling molecule that couples DNA integrity with progression of sporulation. The rise in c-di-AMP level generated by DisA while scanning the chromosome, operates as a positive signal that advances sporulation; upon encountering a lesion, the DisA focus arrests at the damaged site and halts c-di-AMP synthesis. The chain is DNA integrity scanning protein DisA from Clostridium acetobutylicum (strain ATCC 824 / DSM 792 / JCM 1419 / IAM 19013 / LMG 5710 / NBRC 13948 / NRRL B-527 / VKM B-1787 / 2291 / W).